Here is a 173-residue protein sequence, read N- to C-terminus: Lens fiber membrane intrinsic protein (173 aa).

Over 1 to 3 (MYS) the chain is Cytoplasmic. The helical transmembrane segment at 4–24 (FMGGGLFCAWVGTILLVVATA) threads the bilayer. At 25 to 66 (TDHWMQYRLSGSFAHQGLWRYCLGNKCFLQTESIAYWNATRA) the chain is on the extracellular side. C-linked (Man) tryptophan glycosylation is found at tryptophan 43 and tryptophan 61. Asparagine 62 is a glycosylation site (N-linked (GlcNAc...) asparagine). A helical membrane pass occupies residues 67-87 (FMILSALCATSGIIMGVLAFA). Over 88–98 (QQSTFTRLSRP) the chain is Cytoplasmic. Residues 99–119 (FSAGIMFFASTLFVLLALAIY) form a helical membrane-spanning segment. Topologically, residues 120–140 (TGVTVSFLGRRFGDWRFSWSY) are extracellular. Residues 141-161 (ILGWVALLMTFFAGIFYMCAY) form a helical membrane-spanning segment. The Cytoplasmic segment spans residues 162-173 (RMHECRRLATPR). At threonine 171 the chain carries Phosphothreonine.

This sequence belongs to the PMP-22/EMP/MP20 family. In terms of assembly, seems to be associated with itself or another lens membrane component via disulfide bonds.

It localises to the membrane. Present in the thicker 16-17 nm junctions of mammalian lens fiber cells, where it may contribute to cell junctional organization. Acts as a receptor for calmodulin. May play an important role in both lens development and cataractogenesis. The protein is Lens fiber membrane intrinsic protein (Lim2) of Mus musculus (Mouse).